A 147-amino-acid chain; its full sequence is Hemoglobin subunit beta (147 aa).

Residue V2 is modified to N-acetylvaline. The Globin domain maps to 3–147 (HLTGEEKAAV…VANALAHKYH (145 aa)). T13 carries the phosphothreonine modification. S45 carries the phosphoserine modification. Residue K60 is modified to N6-acetyllysine. H64 contacts heme b. Residue K83 is modified to N6-acetyllysine. H93 is a binding site for heme b. Residue C94 is modified to S-nitrosocysteine. K145 is modified (N6-acetyllysine).

The protein belongs to the globin family. As to quaternary structure, heterotetramer of two alpha chains and two beta chains. In terms of tissue distribution, red blood cells.

In terms of biological role, involved in oxygen transport from the lung to the various peripheral tissues. In Ateles belzebuth (White-bellied spider monkey), this protein is Hemoglobin subunit beta (HBB).